Consider the following 78-residue polypeptide: Putative membrane protein insertion efficiency factor (78 aa).

This sequence belongs to the UPF0161 family.

It is found in the cell membrane. In terms of biological role, could be involved in insertion of integral membrane proteins into the membrane. This Bacillus anthracis (strain A0248) protein is Putative membrane protein insertion efficiency factor.